Here is a 100-residue protein sequence, read N- to C-terminus: Large ribosomal subunit protein uL23 (100 aa).

It belongs to the universal ribosomal protein uL23 family. Part of the 50S ribosomal subunit. Contacts protein L29, and trigger factor when it is bound to the ribosome.

In terms of biological role, one of the early assembly proteins it binds 23S rRNA. One of the proteins that surrounds the polypeptide exit tunnel on the outside of the ribosome. Forms the main docking site for trigger factor binding to the ribosome. The chain is Large ribosomal subunit protein uL23 from Synechococcus sp. (strain CC9605).